An 844-amino-acid chain; its full sequence is MVNFTVDEIRGLMDKKRNIRNMSVIAHVDHGKSTLTDSLVSKAGIIAGAKAGETRFTDTRKDEQERCITIKSTAISMYFEVEEKDLVFITHPDQREKECKGFLINLIDSPGHVDFSSEVTAALRVTDGALVVVDCVSGVCVQTETVLRQAIAERIKPILFMNKMDRALLELQLDAEELYQTFQRIVENVNVIIATYNDDGGPMGEVRVDPSKGSVGFGSGLHGWAFTLKQFSEMYSEKFKIDVVKLMNRLWGENFFNAKTKKWQKQKEADNKRSFCMYILDPIYKVFDAIMNYKKEEIGTLLEKIGVTLKHEDKDKDGKALLKTVMRTWLPAGEALLQMIAIHLPSPVVAQKYRMEMLYEGPHDDEAAIAVKSCDPDGPLMMYISKMVPTSDKGRFYAFGRVFAGKVATGQKCRIMGPNYTPGKKEDLYEKAIQRTILMMGRYVEAIEDVPSGNICGLVGVDQFLVKTGTITTFKDAHNMKVMKFSVSPVVRVAVEPKNPADLPKLVEGLKRLAKSDPMVQCIIEESGEHIIAGAGELHLEICLKDLEEDHACIPLKKSDPVVSYRETVSEESDQMCLSKSPNKHNRLLMKALPMPDGLPEDIDNGDVSAKDEFKARARYLSEKYDYDVTEARKIWCFGPDGTGPNFILDCTKSVQYLNEIKDSVVAGFQWASKEGILADENLRGVRFNIYDVTLHADAIHRGGGQIIPTTRRCLYAAAITAKPRLMEPVYLCEIQCPEVAVGGIYGVLNRRRGHVFEENQVVGTPMFVVKAYLPVNESFGFTADLRSNTGGQAFPQCVFDHWQVLPGDPSEPSSKPYAIVQDTRKRKGLKEGLPDLSQYLDKL.

The 332-residue stretch at 17-348 (RNIRNMSVIA…MIAIHLPSPV (332 aa)) folds into the tr-type G domain. 26–33 (AHVDHGKS) contributes to the GTP binding site. Residues Thr57 and Thr59 each carry the phosphothreonine modification. GTP is bound by residues 162-165 (NKMD) and 219-221 (SGL). Diphthamide is present on His701.

Belongs to the TRAFAC class translation factor GTPase superfamily. Classic translation factor GTPase family. EF-G/EF-2 subfamily. In terms of processing, phosphorylation by EF-2 kinase completely inactivates eEF2.

It localises to the cytoplasm. The catalysed reaction is GTP + H2O = GDP + phosphate + H(+). Functionally, catalyzes the GTP-dependent ribosomal translocation step during translation elongation. During this step, the ribosome changes from the pre-translocational (PRE) to the post-translocational (POST) state as the newly formed A-site-bound peptidyl-tRNA and P-site-bound deacylated tRNA move to the P and E sites, respectively. Catalyzes the coordinated movement of the two tRNA molecules, the mRNA and conformational changes in the ribosome. This is Eukaryotic translation elongation factor 2 from Drosophila melanogaster (Fruit fly).